A 455-amino-acid chain; its full sequence is GTPase Der (455 aa).

EngA-type G domains follow at residues 4 to 169 (PIVA…PPKH) and 178 to 353 (IQMA…EQHR). Residues 10-17 (GRPNVGKS), 57-61 (DTGGL), 120-123 (NKCE), 184-191 (GRPNVGKS), 231-235 (DTAGI), and 296-299 (NKWD) each bind GTP. The region spanning 354 to 439 (RRVSTSVVNE…PLKLFWRGKQ (86 aa)) is the KH-like domain.

The protein belongs to the TRAFAC class TrmE-Era-EngA-EngB-Septin-like GTPase superfamily. EngA (Der) GTPase family. As to quaternary structure, associates with the 50S ribosomal subunit.

Functionally, GTPase that plays an essential role in the late steps of ribosome biogenesis. This is GTPase Der from Prochlorococcus marinus (strain MIT 9313).